Reading from the N-terminus, the 110-residue chain is UPF0060 membrane protein PFL_4337 (110 aa).

The next 4 helical transmembrane spans lie at 5-25 (LWFF…WMWL), 31-51 (ALWV…LTKV), 59-79 (AYAA…AVVE), and 84-104 (LGSD…ILFG).

Belongs to the UPF0060 family.

Its subcellular location is the cell inner membrane. This is UPF0060 membrane protein PFL_4337 from Pseudomonas fluorescens (strain ATCC BAA-477 / NRRL B-23932 / Pf-5).